Reading from the N-terminus, the 431-residue chain is Phosphoribosylamine--glycine ligase (431 aa).

The ATP-grasp domain occupies 108 to 315 (KDFLARHKIP…LVLLIEAALA (208 aa)). 134-195 (LREKGAPIVI…EEFLDGEEAS (62 aa)) serves as a coordination point for ATP. Mg(2+) is bound by residues Glu285 and Asn287.

The protein belongs to the GARS family. Mg(2+) is required as a cofactor. Mn(2+) serves as cofactor.

It carries out the reaction 5-phospho-beta-D-ribosylamine + glycine + ATP = N(1)-(5-phospho-beta-D-ribosyl)glycinamide + ADP + phosphate + H(+). It functions in the pathway purine metabolism; IMP biosynthesis via de novo pathway; N(1)-(5-phospho-D-ribosyl)glycinamide from 5-phospho-alpha-D-ribose 1-diphosphate: step 2/2. The polypeptide is Phosphoribosylamine--glycine ligase (Pseudomonas syringae pv. tomato (strain ATCC BAA-871 / DC3000)).